We begin with the raw amino-acid sequence, 572 residues long: Putative two-component response regulator ARR13 (572 aa).

One can recognise a Response regulatory domain in the interval 17-134 (NVMVVDDNRV…DLPKIYQFAL (118 aa)). At aspartate 71 the chain carries 4-aspartylphosphate. Residues 175-225 (KKNCSSKSDTRTVNSTNVSHVSTNGSRKNRKRKPKGGPSDDGESLSQPPKK) are disordered. Residues 179 to 197 (SSKSDTRTVNSTNVSHVST) show a composition bias toward polar residues. The short motif at 224-227 (KKKK) is the Nuclear localization signal element. A DNA-binding region (myb-like GARP) is located at residues 227–277 (KIWWTNPLQDLFLQAIQHIGYDKVVPKKILAIMNVPYLTRENVASHLQKYR). Over residues 509 to 522 (NQDQSNGESSNTIA) the composition is skewed to polar residues. The interval 509–531 (NQDQSNGESSNTIATPETNTPNF) is disordered.

This sequence belongs to the ARR family. Type-B subfamily. As to quaternary structure, binds the target DNA as a monomer. In terms of processing, two-component system major event consists of a His-to-Asp phosphorelay between a sensor histidine kinase (HK) and a response regulator (RR). In plants, the His-to-Asp phosphorelay involves an additional intermediate named Histidine-containing phosphotransfer protein (HPt). This multistep phosphorelay consists of a His-Asp-His-Asp sequential transfer of a phosphate group between first a His and an Asp of the HK protein, followed by the transfer to a conserved His of the HPt protein and finally the transfer to an Asp in the receiver domain of the RR protein.

Its subcellular location is the nucleus. Putative transcriptional activator that binds specifically to the DNA sequence 5'-[AG]GATT-3'. Functions as a response regulator involved in His-to-Asp phosphorelay signal transduction system. Phosphorylation of the Asp residue in the receiver domain activates the ability of the protein to promote the transcription of target genes. Could directly activate some type-A response regulators in response to cytokinins. The protein is Putative two-component response regulator ARR13 (ARR13) of Arabidopsis thaliana (Mouse-ear cress).